Consider the following 295-residue polypeptide: Ethanolamine ammonia-lyase small subunit (295 aa).

3 residues coordinate adenosylcob(III)alamin: Val207, Glu228, and Cys258.

It belongs to the EutC family. In terms of assembly, the basic unit is a heterodimer which dimerizes to form tetramers. The heterotetramers trimerize; 6 large subunits form a core ring with 6 small subunits projecting outwards. It depends on adenosylcob(III)alamin as a cofactor.

It is found in the bacterial microcompartment. The catalysed reaction is ethanolamine = acetaldehyde + NH4(+). It participates in amine and polyamine degradation; ethanolamine degradation. Functionally, catalyzes the deamination of various vicinal amino-alcohols to oxo compounds. Allows this organism to utilize ethanolamine as the sole source of nitrogen and carbon in the presence of external vitamin B12. The polypeptide is Ethanolamine ammonia-lyase small subunit (Escherichia coli O139:H28 (strain E24377A / ETEC)).